Consider the following 309-residue polypeptide: Ribonuclease Z (309 aa).

Residues His-63, His-65, Asp-67, His-68, His-145, Asp-216, and His-274 each coordinate Zn(2+). Asp-67 functions as the Proton acceptor in the catalytic mechanism.

This sequence belongs to the RNase Z family. As to quaternary structure, homodimer. Requires Zn(2+) as cofactor.

It carries out the reaction Endonucleolytic cleavage of RNA, removing extra 3' nucleotides from tRNA precursor, generating 3' termini of tRNAs. A 3'-hydroxy group is left at the tRNA terminus and a 5'-phosphoryl group is left at the trailer molecule.. Functionally, zinc phosphodiesterase, which displays some tRNA 3'-processing endonuclease activity. Probably involved in tRNA maturation, by removing a 3'-trailer from precursor tRNA. This is Ribonuclease Z from Streptococcus pneumoniae (strain 70585).